The following is an 879-amino-acid chain: Protein translocase subunit SecA (879 aa).

Residues Gln-86, 104–108, and Asp-500 contribute to the ATP site; that span reads GEGKT. 4 residues coordinate Zn(2+): Cys-863, Cys-865, Cys-874, and His-875.

It belongs to the SecA family. As to quaternary structure, monomer and homodimer. Part of the essential Sec protein translocation apparatus which comprises SecA, SecYEG and auxiliary proteins SecDF-YajC and YidC. It depends on Zn(2+) as a cofactor.

It is found in the cell inner membrane. The protein localises to the cytoplasm. It catalyses the reaction ATP + H2O + cellular proteinSide 1 = ADP + phosphate + cellular proteinSide 2.. Functionally, part of the Sec protein translocase complex. Interacts with the SecYEG preprotein conducting channel. Has a central role in coupling the hydrolysis of ATP to the transfer of proteins into and across the cell membrane, serving both as a receptor for the preprotein-SecB complex and as an ATP-driven molecular motor driving the stepwise translocation of polypeptide chains across the membrane. The protein is Protein translocase subunit SecA of Orientia tsutsugamushi (strain Ikeda) (Rickettsia tsutsugamushi).